A 343-amino-acid polypeptide reads, in one-letter code: Cytoplasmic tRNA 2-thiolation protein 1 (343 aa).

Belongs to the TtcA family. CTU1/NCS6/ATPBD3 subfamily.

The protein resides in the cytoplasm. It functions in the pathway tRNA modification; 5-methoxycarbonylmethyl-2-thiouridine-tRNA biosynthesis. In terms of biological role, plays a central role in 2-thiolation of mcm(5)S(2)U at tRNA wobble positions of tRNA(Lys), tRNA(Glu) and tRNA(Gln). Directly binds tRNAs and probably acts by catalyzing adenylation of tRNAs, an intermediate required for 2-thiolation. It is unclear whether it acts as a sulfurtransferase that transfers sulfur from thiocarboxylated URM1 onto the uridine of tRNAs at wobble position. The sequence is that of Cytoplasmic tRNA 2-thiolation protein 1 from Drosophila virilis (Fruit fly).